A 300-amino-acid polypeptide reads, in one-letter code: Ribosomal RNA small subunit methyltransferase H (300 aa).

S-adenosyl-L-methionine-binding positions include 33–35 (GGH), D52, F79, D100, and Q107.

This sequence belongs to the methyltransferase superfamily. RsmH family.

It localises to the cytoplasm. It catalyses the reaction cytidine(1402) in 16S rRNA + S-adenosyl-L-methionine = N(4)-methylcytidine(1402) in 16S rRNA + S-adenosyl-L-homocysteine + H(+). In terms of biological role, specifically methylates the N4 position of cytidine in position 1402 (C1402) of 16S rRNA. The protein is Ribosomal RNA small subunit methyltransferase H of Mycoplasmopsis agalactiae (strain NCTC 10123 / CIP 59.7 / PG2) (Mycoplasma agalactiae).